We begin with the raw amino-acid sequence, 218 residues long: CTD kinase subunit gamma (218 aa).

The CID domain occupies 2–138 (DPFEGRMTFL…DAMATVEAHE (137 aa)). Residues 137-157 (HEQASKSGDTSTSGAISKNDI) are disordered. Residues 141-152 (SKSGDTSTSGAI) are compositionally biased toward polar residues.

Belongs to the CTK3 family. CTDK-I consists of three subunits, ctk1/lsk1, ctk2/lsc1 and ctk3 (also called alpha, beta and gamma).

The protein resides in the cytoplasm. It is found in the nucleus. Its function is as follows. Subunit of the CTDK-I complex, which hyperphosphorylates the C-terminal heptapeptide repeat domain (CTD) of the largest RNA polymerase II subunit. As part of the CTDK-I complex, involved in RNA polymerase II transcriptional elongation and pre-mRNA 3'-end processing. Together with ctk2, required for ctk1/lsk1 CTD kinase activation. The chain is CTD kinase subunit gamma from Schizosaccharomyces pombe (strain 972 / ATCC 24843) (Fission yeast).